The following is a 199-amino-acid chain: MTNQTEKEQVEQDVSQATELAQEAQEAQTQDVEPELQQNNEIDPLEEAIARVQELEAYIAEADKREQDIQLRARAEVENIRRRAEQDVEKAHKFALEKFSKEMLTVVDNLERGLQALEGVDESVKSGVELTHKGLVSTLNNFGVEAVGVVGEAFNPELHQAISMQPAEGIEANHISVVLQKGYTLHGRVIRPAMVMVAS.

The segment covering 1–10 has biased composition (basic and acidic residues); it reads MTNQTEKEQV. Positions 1–44 are disordered; it reads MTNQTEKEQVEQDVSQATELAQEAQEAQTQDVEPELQQNNEIDP. Over residues 16-30 the composition is skewed to low complexity; sequence QATELAQEAQEAQTQ.

This sequence belongs to the GrpE family. In terms of assembly, homodimer.

The protein localises to the cytoplasm. Its function is as follows. Participates actively in the response to hyperosmotic and heat shock by preventing the aggregation of stress-denatured proteins, in association with DnaK and GrpE. It is the nucleotide exchange factor for DnaK and may function as a thermosensor. Unfolded proteins bind initially to DnaJ; upon interaction with the DnaJ-bound protein, DnaK hydrolyzes its bound ATP, resulting in the formation of a stable complex. GrpE releases ADP from DnaK; ATP binding to DnaK triggers the release of the substrate protein, thus completing the reaction cycle. Several rounds of ATP-dependent interactions between DnaJ, DnaK and GrpE are required for fully efficient folding. The polypeptide is Protein GrpE (Glaesserella parasuis serovar 5 (strain SH0165) (Haemophilus parasuis)).